A 363-amino-acid chain; its full sequence is Peroxin-36 (363 aa).

Topologically, residues Met-1 to Gln-193 are cytoplasmic. Disordered regions lie at residues Gln-71–Thr-114 and Thr-128–Gly-157. The segment covering Val-97–Thr-114 has biased composition (low complexity). A helical transmembrane segment spans residues Leu-194–Ser-213. Topologically, residues Asn-214 to Lys-232 are peroxisomal. The chain crosses the membrane as a helical span at residues Ile-233–Ile-250. Residues Lys-251 to Ala-363 lie on the Cytoplasmic side of the membrane.

It localises to the peroxisome membrane. In terms of biological role, controls peroxisome morphology and abundance under conditions of peroxisome proliferation such as oleate and methanol media. Has additional function(s), which is not present in its functional homologs such as Saccharomyces cerevisea PEX34 or human PEX16. The chain is Peroxin-36 from Komagataella phaffii (strain GS115 / ATCC 20864) (Yeast).